The chain runs to 85 residues: U4-theraphotoxin-Hhn1t (85 aa).

An N-terminal signal peptide occupies residues 1 to 22 (MKVTLIAILTCAAVLVLHTTAA). Residues 23–48 (EELEAESQLMEVGMPDTELAAVDEER) constitute a propeptide that is removed on maturation. Intrachain disulfides connect Cys-52–Cys-66, Cys-56–Cys-77, and Cys-71–Cys-82.

This sequence belongs to the neurotoxin 12 (Hwtx-2) family. 02 (Hwtx-2) subfamily. In terms of tissue distribution, expressed by the venom gland.

Its subcellular location is the secreted. Functionally, postsynaptic neurotoxin. The polypeptide is U4-theraphotoxin-Hhn1t (Cyriopagopus hainanus (Chinese bird spider)).